The sequence spans 244 residues: Phosphate propanoyltransferase (244 aa).

A CoA-binding site is contributed by 52-54 (ISA). His56 and His58 together coordinate Zn(2+). Arg106 lines the CoA pocket. A phosphate-binding site is contributed by Arg112. Glu118, His166, His168, and His214 together coordinate Zn(2+). Asn221 lines the CoA pocket.

Belongs to the PduL family. Full-length protein forms large oligomers. Possible homotrimer and monomer, when purified in the absence of the encapsulation peptide (EP, residues 1-20). The EP may influence oligomerization. Zn(2+) is required as a cofactor.

The protein localises to the bacterial microcompartment. The catalysed reaction is propanoyl-CoA + phosphate = propanoyl phosphate + CoA. Functionally, part of a bacterial microcompartment (BMC) locus required for growth on plant and algal sugars, including L-fucose and L-rhamnose. Thought to be active on lactyl-CoA in a lactaldehyde-degradation pathway. CoA is regenerated within the BMC via this enzyme, although there must also be cofactor transport across the BMC. Directly targeted to the BMC. This is Phosphate propanoyltransferase from Planctopirus limnophila (strain ATCC 43296 / DSM 3776 / IFAM 1008 / Mu 290) (Planctomyces limnophilus).